The sequence spans 128 residues: Diacylglycerol kinase (128 aa).

Residue Glu-34 participates in a divalent metal cation binding. A run of 2 helical transmembrane segments spans residues 35–55 (SAFRQIVILALFCIVLASYLA) and 58–78 (FLEWGLLILPCFLSVVVELIN). The active-site Proton acceptor is the Glu-75. Glu-82 lines the a divalent metal cation pocket. Residues 107-127 (QLIGLIFWTLIWGRYLLALYL) traverse the membrane as a helical segment.

This sequence belongs to the bacterial diacylglycerol kinase family. Requires Mg(2+) as cofactor.

The protein localises to the cell inner membrane. It catalyses the reaction a 1,2-diacyl-sn-glycerol + ATP = a 1,2-diacyl-sn-glycero-3-phosphate + ADP + H(+). In terms of biological role, catalyzes the ATP-dependent phosphorylation of sn-l,2-diacylglycerol (DAG) to phosphatidic acid. Involved in the recycling of diacylglycerol produced as a by-product during membrane-derived oligosaccharide (MDO) biosynthesis. The sequence is that of Diacylglycerol kinase (dgkA) from Helicobacter pylori (strain ATCC 700392 / 26695) (Campylobacter pylori).